A 161-amino-acid chain; its full sequence is SsrA-binding protein (161 aa).

It belongs to the SmpB family.

It localises to the cytoplasm. Its function is as follows. Required for rescue of stalled ribosomes mediated by trans-translation. Binds to transfer-messenger RNA (tmRNA), required for stable association of tmRNA with ribosomes. tmRNA and SmpB together mimic tRNA shape, replacing the anticodon stem-loop with SmpB. tmRNA is encoded by the ssrA gene; the 2 termini fold to resemble tRNA(Ala) and it encodes a 'tag peptide', a short internal open reading frame. During trans-translation Ala-aminoacylated tmRNA acts like a tRNA, entering the A-site of stalled ribosomes, displacing the stalled mRNA. The ribosome then switches to translate the ORF on the tmRNA; the nascent peptide is terminated with the 'tag peptide' encoded by the tmRNA and targeted for degradation. The ribosome is freed to recommence translation, which seems to be the essential function of trans-translation. In Vibrio vulnificus (strain YJ016), this protein is SsrA-binding protein.